Reading from the N-terminus, the 572-residue chain is Methionine--tRNA ligase (572 aa).

The 'HIGH' region motif lies at Pro11–Asn21. Residues Cys143, Cys146, Cys156, and Cys159 each coordinate Zn(2+). A 'KMSKS' region motif is present at residues Gln346 to Ser350. Residue Thr349 participates in ATP binding.

The protein belongs to the class-I aminoacyl-tRNA synthetase family. MetG type 1 subfamily. Monomer. Zn(2+) is required as a cofactor.

Its subcellular location is the cytoplasm. The enzyme catalyses tRNA(Met) + L-methionine + ATP = L-methionyl-tRNA(Met) + AMP + diphosphate. Its function is as follows. Is required not only for elongation of protein synthesis but also for the initiation of all mRNA translation through initiator tRNA(fMet) aminoacylation. This Cereibacter sphaeroides (strain KD131 / KCTC 12085) (Rhodobacter sphaeroides) protein is Methionine--tRNA ligase.